The chain runs to 213 residues: NADH-quinone oxidoreductase subunit I (213 aa).

2 4Fe-4S ferredoxin-type domains span residues 74–103 (RFIE…METS) and 113–142 (GNYS…HGTE). [4Fe-4S] cluster contacts are provided by cysteine 83, cysteine 86, cysteine 89, cysteine 93, cysteine 122, cysteine 125, cysteine 128, and cysteine 132.

This sequence belongs to the complex I 23 kDa subunit family. NDH-1 is composed of 14 different subunits. Subunits NuoA, H, J, K, L, M, N constitute the membrane sector of the complex. The cofactor is [4Fe-4S] cluster.

The protein localises to the cell inner membrane. It catalyses the reaction a quinone + NADH + 5 H(+)(in) = a quinol + NAD(+) + 4 H(+)(out). In terms of biological role, NDH-1 shuttles electrons from NADH, via FMN and iron-sulfur (Fe-S) centers, to quinones in the respiratory chain. The immediate electron acceptor for the enzyme in this species is believed to be ubiquinone. Couples the redox reaction to proton translocation (for every two electrons transferred, four hydrogen ions are translocated across the cytoplasmic membrane), and thus conserves the redox energy in a proton gradient. In Campylobacter jejuni subsp. jejuni serotype O:6 (strain 81116 / NCTC 11828), this protein is NADH-quinone oxidoreductase subunit I.